The primary structure comprises 250 residues: 5'-nucleotidase SurE (250 aa).

Residues Asp-8, Asp-9, Ser-39, and Asn-95 each contribute to the a divalent metal cation site.

This sequence belongs to the SurE nucleotidase family. A divalent metal cation is required as a cofactor.

The protein resides in the cytoplasm. It catalyses the reaction a ribonucleoside 5'-phosphate + H2O = a ribonucleoside + phosphate. Functionally, nucleotidase that shows phosphatase activity on nucleoside 5'-monophosphates. This chain is 5'-nucleotidase SurE, found in Cupriavidus necator (strain ATCC 17699 / DSM 428 / KCTC 22496 / NCIMB 10442 / H16 / Stanier 337) (Ralstonia eutropha).